Reading from the N-terminus, the 150-residue chain is Galectin-2 (150 aa).

The Galectin domain occupies asparagine 9–histidine 141. Histidine 51, arginine 55, asparagine 64, glutamate 75, and arginine 77 together coordinate a carbohydrate.

As to quaternary structure, homotetramer. Oligomerization is required for carbohydrate binding.

The protein localises to the secreted. It localises to the extracellular space. The protein resides in the extracellular matrix. It is found in the cell wall. Its subcellular location is the endomembrane system. Functionally, binds lactose. May play a role in fruiting body formation. Displays toxicity towards the nematode C.elegans by binding to a specific Gal-beta-1,4-Fuc-alpha-1,6 modification of N-glycan cores on C.elegans intestinal cells. The polypeptide is Galectin-2 (Cgl2) (Coprinopsis cinerea (Inky cap fungus)).